We begin with the raw amino-acid sequence, 245 residues long: Lactate utilization protein A (245 aa).

It belongs to the LutA/YkgE family.

Functionally, is involved in L-lactate degradation and allows cells to grow with lactate as the sole carbon source. This Exiguobacterium sp. (strain ATCC BAA-1283 / AT1b) protein is Lactate utilization protein A.